The following is a 402-amino-acid chain: MDTKAFKRSLQQSENYHRKGFGQEDEAMGVMNSEYQSSLIQEIRNNNYRLTQGDVTIRLAEAFGFCWGVERAVAMSYETRQHFPNQRIWLTNEVIHNPSVNQRLRDMKVEFIPVIEDQKDFSVVERDDVVILPAFGASVTEMQLLNDKGCTIVDTTCPWVAKVWNSVEKHKKRNYTSIIHGKYKHEETVATSSFAGTYLVVLNMEQAKYVCNYILNGGDKQEFLAKFKKAYSEGFDPDTDLERVGIANQTTMLKSETEEIGKLFEHTMLKKYGPLDLNNHFMSFNTICDATQERQDAMLDLVKEKLDLMVVIGGFNSSNTTHLQEISIHHGIVSYHIDSAARIDLNNHIEHKPLGKDLEVKENWLPDGKIVVGVTSGASTPDIVVEQVLQKIFAIKSAVAMV.

A [4Fe-4S] cluster-binding site is contributed by C66. A (2E)-4-hydroxy-3-methylbut-2-enyl diphosphate-binding site is contributed by H96. A dimethylallyl diphosphate-binding site is contributed by H96. Residue H96 participates in isopentenyl diphosphate binding. C157 contributes to the [4Fe-4S] cluster binding site. H185 is a (2E)-4-hydroxy-3-methylbut-2-enyl diphosphate binding site. A dimethylallyl diphosphate-binding site is contributed by H185. H185 contacts isopentenyl diphosphate. E187 acts as the Proton donor in catalysis. T250 lines the (2E)-4-hydroxy-3-methylbut-2-enyl diphosphate pocket. C288 contributes to the [4Fe-4S] cluster binding site. Residues S317, S318, N319, and S379 each coordinate (2E)-4-hydroxy-3-methylbut-2-enyl diphosphate. Residues S317, S318, N319, and S379 each contribute to the dimethylallyl diphosphate site. Residues S317, S318, N319, and S379 each coordinate isopentenyl diphosphate.

Belongs to the IspH family. It depends on [4Fe-4S] cluster as a cofactor.

The catalysed reaction is isopentenyl diphosphate + 2 oxidized [2Fe-2S]-[ferredoxin] + H2O = (2E)-4-hydroxy-3-methylbut-2-enyl diphosphate + 2 reduced [2Fe-2S]-[ferredoxin] + 2 H(+). The enzyme catalyses dimethylallyl diphosphate + 2 oxidized [2Fe-2S]-[ferredoxin] + H2O = (2E)-4-hydroxy-3-methylbut-2-enyl diphosphate + 2 reduced [2Fe-2S]-[ferredoxin] + 2 H(+). It participates in isoprenoid biosynthesis; dimethylallyl diphosphate biosynthesis; dimethylallyl diphosphate from (2E)-4-hydroxy-3-methylbutenyl diphosphate: step 1/1. The protein operates within isoprenoid biosynthesis; isopentenyl diphosphate biosynthesis via DXP pathway; isopentenyl diphosphate from 1-deoxy-D-xylulose 5-phosphate: step 6/6. Its function is as follows. Catalyzes the conversion of 1-hydroxy-2-methyl-2-(E)-butenyl 4-diphosphate (HMBPP) into a mixture of isopentenyl diphosphate (IPP) and dimethylallyl diphosphate (DMAPP). Acts in the terminal step of the DOXP/MEP pathway for isoprenoid precursor biosynthesis. The chain is 4-hydroxy-3-methylbut-2-enyl diphosphate reductase from Gloeothece citriformis (strain PCC 7424) (Cyanothece sp. (strain PCC 7424)).